Consider the following 202-residue polypeptide: Cytochrome c oxidase assembly protein CtaG (202 aa).

At 1 to 14 the chain is on the cytoplasmic side; it reads MTSPANPSEVTRDR. A helical; Signal-anchor for type II membrane protein transmembrane segment spans residues 15–37; it reads RNRGVAFVCAGVFVAMVGMSFAA. Residues 38 to 202 lie on the Periplasmic side of the membrane; the sequence is VPLYRLFCQV…GAAKTQKLGG (165 aa).

The protein belongs to the COX11/CtaG family.

It localises to the cell inner membrane. Its function is as follows. Exerts its effect at some terminal stage of cytochrome c oxidase synthesis, probably by being involved in the insertion of the copper B into subunit I. In Chelativorans sp. (strain BNC1), this protein is Cytochrome c oxidase assembly protein CtaG.